Reading from the N-terminus, the 294-residue chain is Bifunctional protein FolD (294 aa).

NADP(+) contacts are provided by residues 164–166 (GRS), Ser-193, and Ile-234.

It belongs to the tetrahydrofolate dehydrogenase/cyclohydrolase family. In terms of assembly, homodimer.

It catalyses the reaction (6R)-5,10-methylene-5,6,7,8-tetrahydrofolate + NADP(+) = (6R)-5,10-methenyltetrahydrofolate + NADPH. The enzyme catalyses (6R)-5,10-methenyltetrahydrofolate + H2O = (6R)-10-formyltetrahydrofolate + H(+). The protein operates within one-carbon metabolism; tetrahydrofolate interconversion. Its function is as follows. Catalyzes the oxidation of 5,10-methylenetetrahydrofolate to 5,10-methenyltetrahydrofolate and then the hydrolysis of 5,10-methenyltetrahydrofolate to 10-formyltetrahydrofolate. The protein is Bifunctional protein FolD of Flavobacterium psychrophilum (strain ATCC 49511 / DSM 21280 / CIP 103535 / JIP02/86).